The sequence spans 303 residues: Sulfate adenylyltransferase subunit 2 (303 aa).

The protein belongs to the PAPS reductase family. CysD subfamily. In terms of assembly, heterodimer composed of CysD, the smaller subunit, and CysN.

It carries out the reaction sulfate + ATP + H(+) = adenosine 5'-phosphosulfate + diphosphate. The protein operates within sulfur metabolism; hydrogen sulfide biosynthesis; sulfite from sulfate: step 1/3. In terms of biological role, with CysN forms the ATP sulfurylase (ATPS) that catalyzes the adenylation of sulfate producing adenosine 5'-phosphosulfate (APS) and diphosphate, the first enzymatic step in sulfur assimilation pathway. APS synthesis involves the formation of a high-energy phosphoric-sulfuric acid anhydride bond driven by GTP hydrolysis by CysN coupled to ATP hydrolysis by CysD. The sequence is that of Sulfate adenylyltransferase subunit 2 from Sulfurovum sp. (strain NBC37-1).